A 304-amino-acid chain; its full sequence is Ornithine carbamoyltransferase (304 aa).

Carbamoyl phosphate-binding positions include Ser-47 to Thr-50, Arg-98, and His-125 to Gln-128. L-ornithine-binding positions include Asn-156, Asp-221, and Ser-225–Met-226. Carbamoyl phosphate contacts are provided by residues Cys-262 to Leu-263 and Arg-290.

The protein belongs to the aspartate/ornithine carbamoyltransferase superfamily. OTCase family.

Its subcellular location is the cytoplasm. The enzyme catalyses carbamoyl phosphate + L-ornithine = L-citrulline + phosphate + H(+). The protein operates within amino-acid biosynthesis; L-arginine biosynthesis; L-arginine from L-ornithine and carbamoyl phosphate: step 1/3. Its function is as follows. Reversibly catalyzes the transfer of the carbamoyl group from carbamoyl phosphate (CP) to the N(epsilon) atom of ornithine (ORN) to produce L-citrulline. This Methanococcus maripaludis (strain C7 / ATCC BAA-1331) protein is Ornithine carbamoyltransferase.